We begin with the raw amino-acid sequence, 297 residues long: Pantothenate synthetase (297 aa).

30–37 (MGYLHAGH) serves as a coordination point for ATP. The active-site Proton donor is His-37. Residue Gln-61 participates in (R)-pantoate binding. Gln-61 lines the beta-alanine pocket. An ATP-binding site is contributed by 147–150 (GEKD). Residue Gln-153 coordinates (R)-pantoate. Residues Val-176 and 184–187 (LSSR) each bind ATP.

This sequence belongs to the pantothenate synthetase family. As to quaternary structure, homodimer.

The protein resides in the cytoplasm. The enzyme catalyses (R)-pantoate + beta-alanine + ATP = (R)-pantothenate + AMP + diphosphate + H(+). It functions in the pathway cofactor biosynthesis; (R)-pantothenate biosynthesis; (R)-pantothenate from (R)-pantoate and beta-alanine: step 1/1. In terms of biological role, catalyzes the condensation of pantoate with beta-alanine in an ATP-dependent reaction via a pantoyl-adenylate intermediate. In Rhizobium etli (strain ATCC 51251 / DSM 11541 / JCM 21823 / NBRC 15573 / CFN 42), this protein is Pantothenate synthetase.